The primary structure comprises 226 residues: Cytidylate kinase (226 aa).

10-18 (GPASSGKST) contacts ATP.

It belongs to the cytidylate kinase family. Type 1 subfamily.

It localises to the cytoplasm. The enzyme catalyses CMP + ATP = CDP + ADP. It carries out the reaction dCMP + ATP = dCDP + ADP. The chain is Cytidylate kinase from Streptococcus pyogenes serotype M5 (strain Manfredo).